We begin with the raw amino-acid sequence, 227 residues long: Type II restriction enzyme ScaI (227 aa).

Residues 12–35 (EARVGTRTGGPAMRPKTSDSPYFG) form a disordered region.

It catalyses the reaction Endonucleolytic cleavage of DNA to give specific double-stranded fragments with terminal 5'-phosphates.. Its function is as follows. A P subtype restriction enzyme that recognizes the double-stranded sequence 5'-AGTACT-3' and cleaves after T-3. This Streptomyces caespitosus protein is Type II restriction enzyme ScaI.